A 355-amino-acid polypeptide reads, in one-letter code: MSGNSYGKIFKITTFGESHGEALGGIIDGCPPNIILDLDAIQIEMQRRKPGQSSIVTQRKEADEVQFLSGIFEGKTTGTPIGFIIKNTNQKSDDYSHIKDSYRPSHADYVYEKKYRIRDYRGGGRSSARETASRVVAGAIAKQVIPEIKINAFVSSVGDISLDKPYQDLNFSLTETNAVRCPDLASAEKMENYIKEIKKQGDTVGGTITCVIQNVPIGLGEPVFDKLHAELGKAMLSINAVKGFEYGSGFCGAKMKGSNHNDPYNQDGTTRTNLSGGIQGGISNGMDIYFRIAFKPVATLIQKQEVLTNTNEIIEQQGKGRHDPCVVPRAVPIVEAMAAIVMADFFLLNKIYNNH.

Arg-48 serves as a coordination point for NADP(+). FMN-binding positions include 125–127 (RSS), 239–240 (NA), Gly-280, 295–299 (KPVAT), and Arg-321.

Belongs to the chorismate synthase family. Homotetramer. FMNH2 serves as cofactor.

The enzyme catalyses 5-O-(1-carboxyvinyl)-3-phosphoshikimate = chorismate + phosphate. Its pathway is metabolic intermediate biosynthesis; chorismate biosynthesis; chorismate from D-erythrose 4-phosphate and phosphoenolpyruvate: step 7/7. Functionally, catalyzes the anti-1,4-elimination of the C-3 phosphate and the C-6 proR hydrogen from 5-enolpyruvylshikimate-3-phosphate (EPSP) to yield chorismate, which is the branch point compound that serves as the starting substrate for the three terminal pathways of aromatic amino acid biosynthesis. This reaction introduces a second double bond into the aromatic ring system. This Flavobacterium psychrophilum (strain ATCC 49511 / DSM 21280 / CIP 103535 / JIP02/86) protein is Chorismate synthase.